The primary structure comprises 1238 residues: ATP-dependent helicase/nuclease subunit A (1238 aa).

The UvrD-like helicase ATP-binding domain maps to 6–474 (TKWTETQKSA…IKLSENFRSR (469 aa)). 27 to 34 (AGAGTGKT) is a binding site for ATP. The UvrD-like helicase C-terminal domain maps to 512 to 811 (PFEGNCGGDV…RIMSIHKSKG (300 aa)).

The protein belongs to the helicase family. AddA subfamily. As to quaternary structure, heterodimer of AddA and AddB/RexB. Mg(2+) serves as cofactor.

It catalyses the reaction Couples ATP hydrolysis with the unwinding of duplex DNA by translocating in the 3'-5' direction.. The catalysed reaction is ATP + H2O = ADP + phosphate + H(+). The heterodimer acts as both an ATP-dependent DNA helicase and an ATP-dependent, dual-direction single-stranded exonuclease. Recognizes the chi site generating a DNA molecule suitable for the initiation of homologous recombination. The AddA nuclease domain is required for chi fragment generation; this subunit has the helicase and 3' -&gt; 5' nuclease activities. This Clostridium kluyveri (strain NBRC 12016) protein is ATP-dependent helicase/nuclease subunit A.